We begin with the raw amino-acid sequence, 418 residues long: Probable endo-beta-1,4-glucanase celB (418 aa).

Residues 1–18 form the signal peptide; sequence MVRTFAVTALALLPLVAA. 3 N-linked (GlcNAc...) asparagine glycosylation sites follow: asparagine 46, asparagine 118, and asparagine 136. Glutamate 215 acts as the Nucleophile in catalysis. Glutamate 220 functions as the Proton donor in the catalytic mechanism. Residues asparagine 234 and asparagine 291 are each glycosylated (N-linked (GlcNAc...) asparagine).

Belongs to the glycosyl hydrolase 7 (cellulase C) family.

The protein resides in the secreted. It carries out the reaction Endohydrolysis of (1-&gt;4)-beta-D-glucosidic linkages in cellulose, lichenin and cereal beta-D-glucans.. Functionally, has endoglucanase activity on substrates containing beta-1,4 glycosidic bonds, like in carboxymethylcellulose (CMC), hydroxyethylcellulose (HEC) and beta-glucan. Involved in the degradation of complex natural cellulosic substrates. This chain is Probable endo-beta-1,4-glucanase celB (celB), found in Aspergillus clavatus (strain ATCC 1007 / CBS 513.65 / DSM 816 / NCTC 3887 / NRRL 1 / QM 1276 / 107).